The primary structure comprises 99 residues: Citrate lyase acyl carrier protein (99 aa).

S14 carries the O-(phosphoribosyl dephospho-coenzyme A)serine modification.

Belongs to the CitD family. As to quaternary structure, oligomer with a subunit composition of (alpha,beta,gamma)6.

It localises to the cytoplasm. Functionally, covalent carrier of the coenzyme of citrate lyase. The sequence is that of Citrate lyase acyl carrier protein from Edwardsiella ictaluri (strain 93-146).